The primary structure comprises 332 residues: Long form salivary protein D7L1 (332 aa).

A signal peptide spans 1–21 (MHSPKSFLLLAVVFVALRVTA). 2 cysteine pairs are disulfide-bonded: C40-C77 and C73-C133. W61 contributes to the leukotriene E4 binding site. Residue K176 coordinates leukotriene E4. Intrachain disulfides connect C184/C219, C200/C331, and C259/C278. Residues E185 and R203 each coordinate noradrenaline. Noradrenaline is bound by residues D294 and E297.

This sequence belongs to the PBP/GOBP family. In terms of tissue distribution, female mosquito salivary gland (at protein level).

The protein localises to the secreted. In terms of biological role, modulates blood feeding of female mosquitoes on vertebrate species by binding and sequestering different mediators involved in the host response, such as biogenic amines and eicosanoids. Binds dopamine, serotonin, histamine, tryptamine, adrenaline, noradrenaline, leukotriene B4, leukotriene C4, leukotriene D4, leukotriene E4 and U-46619, a stable analog of thromboxane A2. Inhibits platelet aggregation induced by serotonin and low doses of thromboxane A2 analog U-46619 but not by high doses of U-46619, collagen or ADP. Prevents leukocyte recruitment. This Aedes albopictus (Asian tiger mosquito) protein is Long form salivary protein D7L1.